The following is a 316-amino-acid chain: Annexin A13 (316 aa).

A lipid anchor (N-myristoyl glycine) is attached at glycine 2. Annexin repeat units follow at residues 14–85 (FDVD…ALLD), 86–157 (RPSE…SLLQ), 169–241 (DLAG…TLVR), and 245–316 (DCED…ALLH).

This sequence belongs to the annexin family. Monomer and homodimer. In terms of tissue distribution, detected in epithelial cells in colon and jejunum (at protein level). Detected in epithelial cells in jejunum.

Its subcellular location is the apical cell membrane. The protein localises to the cell membrane. It is found in the cytoplasmic vesicle. Functionally, binds to membranes enriched in phosphatidylserine or phosphatidylglycerol in a calcium-dependent manner. Half-maximal membrane binding requires about 60 uM calcium. Does not bind to membranes that lack phospholipids with an acidic headgroup. Its function is as follows. Binds to membranes enriched in phosphatidylserine or phosphatidylglycerol in a calcium-dependent manner, but requires higher calcium levels for membrane binding than isoform A. Half-maximal membrane binding requires about 320 uM calcium. This is Annexin A13 (ANXA13) from Homo sapiens (Human).